Reading from the N-terminus, the 523-residue chain is MQLPKELKYAAIAGGVALFGLIFGWVLFPTILKSQLKKEMALSKKTDVRKMWEKIPFALDFKVYIFNFTNAEEVQKGATPILKEIGPYHFDEWKEKVEVEDHEEDDTITYKKRDVFYFNPEMSGPGLTGEEIVVIPHIFMLGMALTVARDKPAMLNMVGKAMNGIFDDPPDIFLRVKALDILFRGMIINCARTEFAPKATCTALKKEAVSGLVLEPNNQFRFSIFGTRNNTIDPHVITVKRGIKNVMDVGQVVAVDGKLEQTIWRDTCNEYQGTDGTVFPPFVPETERIQSFSTDLCRTFKPWYQKKTSYRGIKTNRYVANIGDFANDPELNCFCPKPDSCPPKGLMDLAPCMKAPMYASMPHFLDSDPELLTKVKGLNPDVTQHGIEIDYEPITGTPMVAKQRIQFNIQLLKTDKLDLFKDLSGDIVPLFWIDEGLALNKTFVNMLKHQLFIPKRVVGVLRWWVVSFGSLGAVIGIVFHFRDHIMRLAVSGDTKVSKVTPEEPEQKDISVIGQAQEPAKVNI.

The Cytoplasmic portion of the chain corresponds to 1–11 (MQLPKELKYAA). Residues 12 to 32 (IAGGVALFGLIFGWVLFPTIL) traverse the membrane as a helical segment. Residues 33-458 (KSQLKKEMAL…HQLFIPKRVV (426 aa)) lie on the Extracellular side of the membrane. N-linked (GlcNAc...) asparagine glycans are attached at residues Asn67 and Asn229. Disulfide bonds link Cys268/Cys333, Cys297/Cys352, and Cys335/Cys341. Asn440 carries an N-linked (GlcNAc...) asparagine glycan. Residues 459–479 (GVLRWWVVSFGSLGAVIGIVF) form a helical membrane-spanning segment. Topologically, residues 480–523 (HFRDHIMRLAVSGDTKVSKVTPEEPEQKDISVIGQAQEPAKVNI) are cytoplasmic.

Belongs to the CD36 family. In terms of tissue distribution, detected in sensory neurons in the antenna.

It localises to the cell membrane. Functionally, plays an olfactory role that is not restricted to pheromone sensitivity. In Heliothis virescens (Tobacco budworm moth), this protein is Sensory neuron membrane protein 1.